A 1653-amino-acid chain; its full sequence is Alpha-2-macroglobulin (1653 aa).

The signal sequence occupies residues 1–17 (MKKLRVAACMLMLALAG). The N-palmitoyl cysteine moiety is linked to residue cysteine 18. Residue cysteine 18 is the site of S-diacylglycerol cysteine attachment. The segment at residues 1187 to 1190 (CLEQ) is a cross-link (isoglutamyl cysteine thioester (Cys-Gln)). The stretch at 1559–1589 (NQNLANGSASLEQSGGEVQNLLNQMQQASIK) forms a coiled coil.

Belongs to the protease inhibitor I39 (alpha-2-macroglobulin) family. Bacterial alpha-2-macroglobulin subfamily. In terms of assembly, may form homooligomers.

The protein localises to the cell inner membrane. Protects the bacterial cell from host peptidases. Acts by a 'trapping' mechanism. Cleavage of the bait-region domain by host peptidases leads to a global conformational change, which results in entrapment of the host peptidase and activation of the thioester bond that covalently binds the attacking host peptidase. Trapped peptidases are still active except against very large substrates. May protect the entire periplam, including the lipoproteins anchored to the periplasmic side of the outer membrane, against intruding endopeptidases. The protein is Alpha-2-macroglobulin (yfhM) of Escherichia coli (strain K12).